We begin with the raw amino-acid sequence, 351 residues long: Methionine import ATP-binding protein MetN (351 aa).

The ABC transporter domain maps to V4–V249. G41–S48 serves as a coordination point for ATP.

It belongs to the ABC transporter superfamily. Methionine importer (TC 3.A.1.24) family. The complex is composed of two ATP-binding proteins (MetN), two transmembrane proteins (MetI) and a solute-binding protein (MetQ).

The protein localises to the cell membrane. It catalyses the reaction L-methionine(out) + ATP + H2O = L-methionine(in) + ADP + phosphate + H(+). The catalysed reaction is D-methionine(out) + ATP + H2O = D-methionine(in) + ADP + phosphate + H(+). Functionally, part of the ABC transporter complex MetNIQ involved in methionine import. Responsible for energy coupling to the transport system. The chain is Methionine import ATP-binding protein MetN from Lactobacillus delbrueckii subsp. bulgaricus (strain ATCC BAA-365 / Lb-18).